The chain runs to 284 residues: Bifunctional protein FolD (284 aa).

NADP(+)-binding positions include 166–168 and Ile-232; that span reads GAS.

It belongs to the tetrahydrofolate dehydrogenase/cyclohydrolase family. As to quaternary structure, homodimer.

The catalysed reaction is (6R)-5,10-methylene-5,6,7,8-tetrahydrofolate + NADP(+) = (6R)-5,10-methenyltetrahydrofolate + NADPH. The enzyme catalyses (6R)-5,10-methenyltetrahydrofolate + H2O = (6R)-10-formyltetrahydrofolate + H(+). It functions in the pathway one-carbon metabolism; tetrahydrofolate interconversion. Catalyzes the oxidation of 5,10-methylenetetrahydrofolate to 5,10-methenyltetrahydrofolate and then the hydrolysis of 5,10-methenyltetrahydrofolate to 10-formyltetrahydrofolate. This chain is Bifunctional protein FolD, found in Pseudomonas putida (strain W619).